Consider the following 417-residue polypeptide: MRLVYGLGRSGLGVLRFLRKRGLPARFYDDRPREEEVREALALGFQPDWNLEEAYEEVVAAPGVPLDHPHLKRLAARGAKVLGEAELAYRLSPTPIVGITGTAGKTSTTLFTAHLLRAHGLRAREGGNVDPPLVSVVDEAEVAVAELSSFQLERVHAFRPRVAVLLNLGVDHLDRHGTVEAYHAAKLNLLKNLTPEDALVYNRLDPKVRRAAEASPARLYPFTPGSTPRETNLRAALEATRAYLDLLGRPLDPGAVAEALRTLPEAPHRFQAFARKGGVVFIDDSIATRTEAVRAALEAAPAPIAWILGGEDKGADLAPLLPLLGRVRVALALGRDGPRFARALEGRTEVVVIAEKDGRTAMRKAVEEALSRLEQGSVLLAPLAASFDQFRDYKDRAQAFREAVFALGGEPWTPSSS.

101–107 contacts ATP; it reads GTAGKTS.

This sequence belongs to the MurCDEF family.

Its subcellular location is the cytoplasm. It carries out the reaction UDP-N-acetyl-alpha-D-muramoyl-L-alanine + D-glutamate + ATP = UDP-N-acetyl-alpha-D-muramoyl-L-alanyl-D-glutamate + ADP + phosphate + H(+). Its pathway is cell wall biogenesis; peptidoglycan biosynthesis. Cell wall formation. Catalyzes the addition of glutamate to the nucleotide precursor UDP-N-acetylmuramoyl-L-alanine (UMA). This Thermus thermophilus (strain ATCC BAA-163 / DSM 7039 / HB27) protein is UDP-N-acetylmuramoylalanine--D-glutamate ligase.